The sequence spans 75 residues: Bacteriocin lactacin-F subunit LafA (75 aa).

A propeptide spanning residues 1 to 18 is cleaved from the precursor; the sequence is MKQFNYLSHKDLAVVVGG.

The protein belongs to the bacteriocin class IIB family. This bacteriocin depends upon the complementation of two peptides for activity: LafA and LafX. Associated with a 180 kDa bacteriocin complex.

Heat stable bacteriocin active against Enterococcus faecalis and other Lactobacilli. The polypeptide is Bacteriocin lactacin-F subunit LafA (lafA) (Lactobacillus johnsonii (strain CNCM I-12250 / La1 / NCC 533)).